We begin with the raw amino-acid sequence, 59 residues long: Conotoxin Sr5.4 (59 aa).

The N-terminal stretch at 1-22 (MRCLPVFVILLLLIASAPSVDA) is a signal peptide. A propeptide spanning residues 23–44 (QLKTKDDVPLASFHDNAKGTQH) is cleaved from the precursor.

The protein belongs to the conotoxin T superfamily. Contains 2 disulfide bonds that can be either 'C1-C3, C2-C4' or 'C1-C4, C2-C3', since these disulfide connectivities have been observed for conotoxins with cysteine framework V (for examples, see AC P0DQQ7 and AC P81755). In terms of tissue distribution, expressed by the venom duct.

Its subcellular location is the secreted. This is Conotoxin Sr5.4 from Conus spurius (Alphabet cone).